A 325-amino-acid chain; its full sequence is ATP phosphoribosyltransferase (325 aa).

Belongs to the ATP phosphoribosyltransferase family. Long subfamily. Mg(2+) serves as cofactor.

The protein localises to the cytoplasm. The catalysed reaction is 1-(5-phospho-beta-D-ribosyl)-ATP + diphosphate = 5-phospho-alpha-D-ribose 1-diphosphate + ATP. It functions in the pathway amino-acid biosynthesis; L-histidine biosynthesis; L-histidine from 5-phospho-alpha-D-ribose 1-diphosphate: step 1/9. Feedback inhibited by histidine. Its function is as follows. Catalyzes the condensation of ATP and 5-phosphoribose 1-diphosphate to form N'-(5'-phosphoribosyl)-ATP (PR-ATP). Has a crucial role in the pathway because the rate of histidine biosynthesis seems to be controlled primarily by regulation of HisG enzymatic activity. The chain is ATP phosphoribosyltransferase from Nitrobacter winogradskyi (strain ATCC 25391 / DSM 10237 / CIP 104748 / NCIMB 11846 / Nb-255).